The primary structure comprises 591 residues: V-type ATP synthase alpha chain (591 aa).

233–240 (GPFGAGKT) contributes to the ATP binding site.

Belongs to the ATPase alpha/beta chains family.

The enzyme catalyses ATP + H2O + 4 H(+)(in) = ADP + phosphate + 5 H(+)(out). In terms of biological role, produces ATP from ADP in the presence of a proton gradient across the membrane. The V-type alpha chain is a catalytic subunit. The chain is V-type ATP synthase alpha chain from Streptococcus pyogenes serotype M3 (strain ATCC BAA-595 / MGAS315).